The sequence spans 415 residues: Gamma-glutamyl phosphate reductase (415 aa).

Belongs to the gamma-glutamyl phosphate reductase family.

The protein resides in the cytoplasm. The enzyme catalyses L-glutamate 5-semialdehyde + phosphate + NADP(+) = L-glutamyl 5-phosphate + NADPH + H(+). It functions in the pathway amino-acid biosynthesis; L-proline biosynthesis; L-glutamate 5-semialdehyde from L-glutamate: step 2/2. Its function is as follows. Catalyzes the NADPH-dependent reduction of L-glutamate 5-phosphate into L-glutamate 5-semialdehyde and phosphate. The product spontaneously undergoes cyclization to form 1-pyrroline-5-carboxylate. This chain is Gamma-glutamyl phosphate reductase, found in Bacillus cereus (strain B4264).